The chain runs to 180 residues: Nucleoside-triphosphatase THEP1 (180 aa).

ATP-binding positions include 9–16 (GRPGIGKT) and 99–106 (VVIVDEVG).

It belongs to the THEP1 NTPase family.

It carries out the reaction a ribonucleoside 5'-triphosphate + H2O = a ribonucleoside 5'-diphosphate + phosphate + H(+). Functionally, has nucleotide phosphatase activity towards ATP, GTP, CTP, TTP and UTP. May hydrolyze nucleoside diphosphates with lower efficiency. This chain is Nucleoside-triphosphatase THEP1, found in Methanopyrus kandleri (strain AV19 / DSM 6324 / JCM 9639 / NBRC 100938).